Consider the following 156-residue polypeptide: 6,7-dimethyl-8-ribityllumazine synthase (156 aa).

Residues phenylalanine 23, 57-59, and 81-83 contribute to the 5-amino-6-(D-ribitylamino)uracil site; these read AYE and AII. Position 86–87 (86–87) interacts with (2S)-2-hydroxy-3-oxobutyl phosphate; sequence GT. Catalysis depends on histidine 89, which acts as the Proton donor. Position 114 (phenylalanine 114) interacts with 5-amino-6-(D-ribitylamino)uracil. Arginine 128 contributes to the (2S)-2-hydroxy-3-oxobutyl phosphate binding site.

Belongs to the DMRL synthase family.

The enzyme catalyses (2S)-2-hydroxy-3-oxobutyl phosphate + 5-amino-6-(D-ribitylamino)uracil = 6,7-dimethyl-8-(1-D-ribityl)lumazine + phosphate + 2 H2O + H(+). Its pathway is cofactor biosynthesis; riboflavin biosynthesis; riboflavin from 2-hydroxy-3-oxobutyl phosphate and 5-amino-6-(D-ribitylamino)uracil: step 1/2. Catalyzes the formation of 6,7-dimethyl-8-ribityllumazine by condensation of 5-amino-6-(D-ribitylamino)uracil with 3,4-dihydroxy-2-butanone 4-phosphate. This is the penultimate step in the biosynthesis of riboflavin. This Helicobacter pylori (strain HPAG1) protein is 6,7-dimethyl-8-ribityllumazine synthase.